We begin with the raw amino-acid sequence, 560 residues long: Cytosolic purine 5'-nucleotidase (560 aa).

The Nucleophile role is filled by Asp52. 2 residues coordinate IMP: Asp52 and Asp54. Residues Asp52 and Asp54 each coordinate Mg(2+). Catalysis depends on Asp54, which acts as the Proton donor. Positions 144 and 154 each coordinate ATP. Positions 202, 206, 215, 249, 250, 251, and 292 each coordinate IMP. Position 351 (Asp351) interacts with Mg(2+). Residue Ser418 is modified to Phosphoserine. Residues Gln453 and Arg456 each coordinate ATP. Phosphoserine occurs at positions 502, 511, and 527. Residues 541–560 (PQEITHCHDEDDDEEEEEEE) form a disordered region. A required for tetramer assembly region spans residues 548–560 (HDEDDDEEEEEEE). Over residues 550–560 (EDDDEEEEEEE) the composition is skewed to acidic residues.

The protein belongs to the 5'(3')-deoxyribonucleotidase family. In terms of assembly, homotetramer. It depends on Mg(2+) as a cofactor.

It localises to the cytoplasm. The protein resides in the cytosol. It carries out the reaction a ribonucleoside 5'-phosphate + H2O = a ribonucleoside + phosphate. The catalysed reaction is a 2'-deoxyribonucleoside + a ribonucleoside 5'-phosphate = a ribonucleoside + a 2'-deoxyribonucleoside 5'-phosphate. The enzyme catalyses IMP + H2O = inosine + phosphate. It catalyses the reaction GMP + H2O = guanosine + phosphate. It carries out the reaction dGMP + H2O = 2'-deoxyguanosine + phosphate. The catalysed reaction is dIMP + H2O = 2'-deoxyinosine + phosphate. The enzyme catalyses XMP + H2O = xanthosine + phosphate. It catalyses the reaction inosine + GMP = guanosine + IMP. It carries out the reaction dGMP + inosine = 2'-deoxyguanosine + IMP. The catalysed reaction is dIMP + inosine = 2'-deoxyinosine + IMP. The enzyme catalyses inosine + UMP = uridine + IMP. It catalyses the reaction inosine + CMP = cytidine + IMP. It carries out the reaction inosine + AMP = IMP + adenosine. Allosterically activated by various compounds including ATP, 2,3-BPG/2,3-Bisphosphoglyceric acid and Ap4A/P1,P4-bis(5'-adenosyl) tetraphosphate. Binding of an allosteric activator is a prerequisiste to magnesium and substrate binding. Inhibited by inorganic phosphate. In terms of biological role, broad specificity cytosolic 5'-nucleotidase that catalyzes the dephosphorylation of 6-hydroxypurine nucleoside 5'-monophosphates. In addition, possesses a phosphotransferase activity by which it can transfer a phosphate from a donor nucleoside monophosphate to an acceptor nucleoside, preferably inosine, deoxyinosine and guanosine. Has the highest activities for IMP and GMP followed by dIMP, dGMP and XMP. Could also catalyze the transfer of phosphates from pyrimidine monophosphates but with lower efficiency. Through these activities regulates the purine nucleoside/nucleotide pools within the cell. The chain is Cytosolic purine 5'-nucleotidase from Mus musculus (Mouse).